Here is a 148-residue protein sequence, read N- to C-terminus: Transcriptional regulator MraZ (148 aa).

2 consecutive SpoVT-AbrB domains span residues 5–53 (ETAI…VEKE) and 82–125 (SALL…SEQA).

It belongs to the MraZ family. Forms oligomers.

The protein resides in the cytoplasm. Its subcellular location is the nucleoid. In Xylella fastidiosa (strain 9a5c), this protein is Transcriptional regulator MraZ.